The following is a 247-amino-acid chain: Oil body-associated protein 2B (247 aa).

A disordered region spans residues 1 to 28; the sequence is MASSDKVPVACPASSGDGKEPMGNPTKT.

It belongs to the OBAP family.

This Arabidopsis thaliana (Mouse-ear cress) protein is Oil body-associated protein 2B.